Here is a 158-residue protein sequence, read N- to C-terminus: Ribonuclease H (158 aa).

Residues 1 to 147 enclose the RNase H type-1 domain; sequence MKVTIYTDGA…CDVLATTAAD (147 aa). Mg(2+) contacts are provided by D8, E52, D74, and D139.

The protein belongs to the RNase H family. As to quaternary structure, monomer. Requires Mg(2+) as cofactor.

It is found in the cytoplasm. It carries out the reaction Endonucleolytic cleavage to 5'-phosphomonoester.. Endonuclease that specifically degrades the RNA of RNA-DNA hybrids. This chain is Ribonuclease H, found in Lachnoclostridium phytofermentans (strain ATCC 700394 / DSM 18823 / ISDg) (Clostridium phytofermentans).